The chain runs to 492 residues: Cysteine--tRNA ligase (492 aa).

Zn(2+) is bound at residue Cys-29. The short motif at Leu-31–His-41 is the 'HIGH' region element. 3 residues coordinate Zn(2+): Cys-229, His-254, and Glu-258. Residues Lys-286–Ser-290 carry the 'KMSKS' region motif.

The protein belongs to the class-I aminoacyl-tRNA synthetase family. Requires Zn(2+) as cofactor.

The protein localises to the cytoplasm. The catalysed reaction is tRNA(Cys) + L-cysteine + ATP = L-cysteinyl-tRNA(Cys) + AMP + diphosphate. The protein is Cysteine--tRNA ligase of Haloarcula marismortui (strain ATCC 43049 / DSM 3752 / JCM 8966 / VKM B-1809) (Halobacterium marismortui).